We begin with the raw amino-acid sequence, 743 residues long: Probable TonB-dependent receptor BfrD (743 aa).

A signal peptide spans 1 to 30; it reads MKFYSSHPMPESLAAAIAVPLLGLLPAAQA. Residues 62–168 form the TBDR plug domain; sequence PLADTPRTVQ…AGGSINLVTK (107 aa). The region spanning 173–743 is the TBDR beta-barrel domain; sequence QDFTEVQAGI…SAMLTFKLSY (571 aa). The TonB C-terminal box signature appears at 726-743; the sequence is YAALGPGRSAMLTFKLSY.

Belongs to the TonB-dependent receptor family.

It is found in the cell outer membrane. Probably involved in iron transport. This is Probable TonB-dependent receptor BfrD (bfrD) from Bordetella pertussis (strain Tohama I / ATCC BAA-589 / NCTC 13251).